The primary structure comprises 26 residues: Thrombopoietin (26 aa).

This sequence belongs to the EPO/TPO family.

It localises to the secreted. Functionally, lineage-specific cytokine affecting the proliferation and maturation of megakaryocytes from their committed progenitor cells. It acts at a late stage of megakaryocyte development. It may be the major physiological regulator of circulating platelets. The protein is Thrombopoietin (THPO) of Sus scrofa (Pig).